Consider the following 96-residue polypeptide: UPF0235 protein YggU (96 aa).

This sequence belongs to the UPF0235 family.

This chain is UPF0235 protein YggU, found in Escherichia coli O127:H6 (strain E2348/69 / EPEC).